Reading from the N-terminus, the 166-residue chain is UPF0304 protein VIBHAR_01542 (166 aa).

It belongs to the UPF0304 family.

This is UPF0304 protein VIBHAR_01542 from Vibrio campbellii (strain ATCC BAA-1116).